Reading from the N-terminus, the 109-residue chain is uncharacterized protein (109 aa).

To A.fulgidus AF1885.

This is an uncharacterized protein from Methanocaldococcus jannaschii (strain ATCC 43067 / DSM 2661 / JAL-1 / JCM 10045 / NBRC 100440) (Methanococcus jannaschii).